Reading from the N-terminus, the 127-residue chain is Aspartate 1-decarboxylase (127 aa).

S25 acts as the Schiff-base intermediate with substrate; via pyruvic acid in catalysis. S25 is modified (pyruvic acid (Ser)). A substrate-binding site is contributed by T57. Y58 acts as the Proton donor in catalysis. G73–A75 contributes to the substrate binding site.

Belongs to the PanD family. Heterooctamer of four alpha and four beta subunits. The cofactor is pyruvate. Post-translationally, is synthesized initially as an inactive proenzyme, which is activated by self-cleavage at a specific serine bond to produce a beta-subunit with a hydroxyl group at its C-terminus and an alpha-subunit with a pyruvoyl group at its N-terminus.

It is found in the cytoplasm. It carries out the reaction L-aspartate + H(+) = beta-alanine + CO2. Its pathway is cofactor biosynthesis; (R)-pantothenate biosynthesis; beta-alanine from L-aspartate: step 1/1. Catalyzes the pyruvoyl-dependent decarboxylation of aspartate to produce beta-alanine. In Listeria monocytogenes serotype 4b (strain F2365), this protein is Aspartate 1-decarboxylase.